The chain runs to 511 residues: Ribonuclease Y (511 aa).

The helical transmembrane segment at 3–23 (VTIVASIACFIVGGILSYVLF) threads the bilayer. In terms of domain architecture, KH spans 201-261 (SVTVFHIESD…VRREIARLAL (61 aa)). In terms of domain architecture, HD spans 327 to 420 (LLQHARETAN…VQVCDAISGA (94 aa)).

This sequence belongs to the RNase Y family.

It localises to the cell membrane. In terms of biological role, endoribonuclease that initiates mRNA decay. The chain is Ribonuclease Y from Bacteroides fragilis (strain ATCC 25285 / DSM 2151 / CCUG 4856 / JCM 11019 / LMG 10263 / NCTC 9343 / Onslow / VPI 2553 / EN-2).